Reading from the N-terminus, the 79-residue chain is MAEAGARRPFFRRRKTCPFTGANAPKIDYKDSKLLMRYVSERGKIVPSRITAVSAKKQRELARAIKRARFLGLLPYVIR.

In terms of assembly, part of the 30S ribosomal subunit. Forms a tight heterodimer with protein bS6. Post-translationally, both N-terminus methionine truncation and retention have been observed for this protein. In terms of processing, may be methylated up to 6 times, on undetermined residues.

In terms of biological role, binds as a heterodimer with protein bS6 to the central domain of the 16S rRNA, where it helps stabilize the platform of the 30S subunit. This is Small ribosomal subunit protein bS18 from Rhodopseudomonas palustris (strain ATCC BAA-98 / CGA009).